The following is an 83-amino-acid chain: Exodeoxyribonuclease 7 small subunit (83 aa).

Belongs to the XseB family. As to quaternary structure, heterooligomer composed of large and small subunits.

The protein resides in the cytoplasm. It catalyses the reaction Exonucleolytic cleavage in either 5'- to 3'- or 3'- to 5'-direction to yield nucleoside 5'-phosphates.. Functionally, bidirectionally degrades single-stranded DNA into large acid-insoluble oligonucleotides, which are then degraded further into small acid-soluble oligonucleotides. This Nitrobacter hamburgensis (strain DSM 10229 / NCIMB 13809 / X14) protein is Exodeoxyribonuclease 7 small subunit.